Consider the following 564-residue polypeptide: Pyruvate decarboxylase (564 aa).

Asp-28 and His-115 together coordinate pyruvate. Residues Thr-390 and 413-415 each bind thiamine diphosphate; that span reads GSI. Mg(2+) is bound at residue Asp-444. Thiamine diphosphate is bound by residues 445-446 and 471-476; these read GS and NNGYTI. The Mg(2+) site is built by Asn-471 and Gly-473. Position 477 (Glu-477) interacts with pyruvate.

It belongs to the TPP enzyme family. Homotetramer. The cofactor is Mg(2+). It depends on thiamine diphosphate as a cofactor.

It carries out the reaction a 2-oxocarboxylate + H(+) = an aldehyde + CO2. It catalyses the reaction pyruvate + H(+) = acetaldehyde + CO2. In Hanseniaspora uvarum (Yeast), this protein is Pyruvate decarboxylase (PDC).